The following is a 576-amino-acid chain: Calmodulin-binding protein 60 B (576 aa).

Residues 1-25 (MMLPTKRPAPDHGDDERNEVMVPEP) form a disordered region. The interval 1–80 (MMLPTKRPAP…HPSSRPSLNR (80 aa)) is calmodulin-binding. Positions 8-25 (PAPDHGDDERNEVMVPEP) are enriched in basic and acidic residues. Residues 150-273 (DERQDWTENE…AFHKRLAYKN (124 aa)) are DNA-binding.

The protein belongs to the plant ACBP60 protein family. In terms of assembly, (Microbial infection) Interacts with V.dahliae SCP41. Interacts with calmodulin (CaM).

It localises to the nucleus. Transcription activator that binds DNA in a sequence-specific manner, likely 5'-GAAATTTTGG-3', to promote the expression of target genes. Required for pathogen resistance. The chain is Calmodulin-binding protein 60 B from Gossypium hirsutum (Upland cotton).